The chain runs to 170 residues: Peptide deformylase-like (170 aa).

The active site involves E139.

It belongs to the polypeptide deformylase family.

The sequence is that of Peptide deformylase-like from Bradyrhizobium diazoefficiens (strain JCM 10833 / BCRC 13528 / IAM 13628 / NBRC 14792 / USDA 110).